The sequence spans 147 residues: Hemoglobin subunit epsilon (147 aa).

A Globin domain is found at 3–147 (HFTAEEKAAI…VAIALGHKYH (145 aa)). Phosphoserine is present on residues Ser14 and Ser51. Residues His64 and His93 each coordinate heme b.

It belongs to the globin family. As to quaternary structure, heterotetramer of two alpha chains and two epsilon chains in early embryonic hemoglobin Gower-2; two zeta chains and two epsilon chains in early embryonic hemoglobin Gower-1. In terms of tissue distribution, red blood cells.

Functionally, the epsilon chain is a beta-type chain of early mammalian embryonic hemoglobin. The polypeptide is Hemoglobin subunit epsilon (HBE1) (Pithecia irrorata (Gray monk saki)).